We begin with the raw amino-acid sequence, 385 residues long: Transcription termination factor 2, mitochondrial (385 aa).

A mitochondrion-targeting transit peptide spans 1-35 (MPWRLPTGHQLCRLCLLRKPRPALKIKPSSACVTY).

The protein belongs to the mTERF family. In terms of assembly, monomer.

The protein localises to the mitochondrion matrix. Its subcellular location is the mitochondrion nucleoid. Binds mitochondrial DNA and plays a role in the regulation of transcription of mitochondrial mRNA and rRNA species. The chain is Transcription termination factor 2, mitochondrial (Mterf2) from Mus musculus (Mouse).